Here is a 1316-residue protein sequence, read N- to C-terminus: DNA-directed RNA polymerase subunit beta' (1316 aa).

Zn(2+)-binding residues include Cys-60, Cys-62, Cys-75, and Cys-78. Asp-535, Asp-537, and Asp-539 together coordinate Mg(2+). Cys-891, Cys-968, Cys-975, and Cys-978 together coordinate Zn(2+).

This sequence belongs to the RNA polymerase beta' chain family. The RNAP catalytic core consists of 2 alpha, 1 beta, 1 beta' and 1 omega subunit. When a sigma factor is associated with the core the holoenzyme is formed, which can initiate transcription. The cofactor is Mg(2+). Zn(2+) is required as a cofactor.

It carries out the reaction RNA(n) + a ribonucleoside 5'-triphosphate = RNA(n+1) + diphosphate. Its function is as follows. DNA-dependent RNA polymerase catalyzes the transcription of DNA into RNA using the four ribonucleoside triphosphates as substrates. This Mycobacterium tuberculosis (strain ATCC 25177 / H37Ra) protein is DNA-directed RNA polymerase subunit beta'.